An 852-amino-acid chain; its full sequence is DNA mismatch repair protein MutS (852 aa).

602-609 (GPNMSGKS) contributes to the ATP binding site.

This sequence belongs to the DNA mismatch repair MutS family.

Its function is as follows. This protein is involved in the repair of mismatches in DNA. It is possible that it carries out the mismatch recognition step. This protein has a weak ATPase activity. In Streptococcus thermophilus (strain ATCC BAA-250 / LMG 18311), this protein is DNA mismatch repair protein MutS.